Consider the following 273-residue polypeptide: DnaJ homolog subfamily C member 27-A (273 aa).

GTP is bound by residues G23–S30, D71–H75, and N134–D137. The 57-residue stretch at D217–K273 folds into the J domain.

Belongs to the small GTPase superfamily. Rab family.

It localises to the nucleus. In terms of biological role, GTPase possibly involved in regulation of the MEK/ERK pathway. The chain is DnaJ homolog subfamily C member 27-A (dnajc27-a) from Xenopus laevis (African clawed frog).